Here is a 191-residue protein sequence, read N- to C-terminus: MGQIEWAMWANEQALASGLILITGGIVATAGQFTQWYLGAYSIAAGVLVCLLEYPRGKRSKGSTMERCGQKYLTRVVKLFGPLTRNYYIRAFLHLGLAVPAGFLLATILGTACLAIASGIYLLAAIRGEQWSPIEPKPKERPQIGGTIKQPPSNPPPRPPAEARKKLSEEAAGVPTGGPQENPMPVNDEVV.

The Cytoplasmic segment spans residues 2–7 (GQIEWA). A helical membrane pass occupies residues 8 to 30 (MWANEQALASGLILITGGIVATA). Residues 31 to 35 (GQFTQ) lie on the Extracellular side of the membrane. The chain crosses the membrane as a helical span at residues 36–53 (WYLGAYSIAAGVLVCLLE). Residues 54 to 69 (YPRGKRSKGSTMERCG) are Cytoplasmic-facing. An intramembrane segment occupies 70–80 (QKYLTRVVKLF). Residues 81–86 (GPLTRN) are Cytoplasmic-facing. Residues 87–104 (YYIRAFLHLGLAVPAGFL) form a helical membrane-spanning segment. Position 105 (Leu105) is a topological domain, extracellular. The helical transmembrane segment at 106 to 126 (ATILGTACLAIASGIYLLAAI) threads the bilayer. At 127 to 191 (RGEQWSPIEP…NPMPVNDEVV (65 aa)) the chain is on the cytoplasmic side. The segment at 134–191 (IEPKPKERPQIGGTIKQPPSNPPPRPPAEARKKLSEEAAGVPTGGPQENPMPVNDEVV) is disordered. Phosphothreonine is present on Thr147. A Glycyl lysine isopeptide (Lys-Gly) (interchain with G-Cter in ubiquitin) cross-link involves residue Lys149. Ser168 bears the Phosphoserine mark.

It belongs to the p22phox family. In terms of assembly, component of the phagocyte NADPH oxidase core complex/cytochrome b558 complex, composed of CYBB (heavy chain (beta)) and CYBA (light chain (alpha)). Component of the phagocyte NADPH oxidase complex composed of an obligatory core heterodimer formed by the membrane proteins CYBA and CYBB and the cytosolic regulatory subunits NCF1/p47-phox, NCF2/p67-phox, NCF4/p40-phox and the small GTPase RAC1 or RAC2. Interacts with NCF1 (via SH3 domain). Interacts with SH3PXD2A. Interacts with DUOX1, DUOX2 and TPO. Interacts with NOX4; this interaction mediates superoxide generation. Interacts with calprotectin (S100A8/9). Interacts with GBP7. Interacts with NOXO1. Forms a heterodimer with NOX3 and is essential for activity and cell membrane localization of NOX3. Interacts with NOX1. Phosphorylation at Thr-147 enhances NADPH oxidase activity by promoting NCF1/p47-phox binding. In terms of processing, ubiquitinated at Lys-149 likely by RNF145.

Its subcellular location is the cell membrane. In terms of biological role, subunit of NADPH oxidase complexes that is required for the NADPH oxidase activity that generates, in various cell types, superoxide from molecular oxygen utilizing NADPH as an electron donor. Subunit of the phagocyte NADPH oxidase complex that mediates the transfer of electrons from cytosolic NADPH to O2 to produce the superoxide anion (O2(-)). In the activated complex, electrons are first transferred from NADPH to flavin adenine dinucleotide (FAD) and subsequently transferred via two heme molecules to molecular oxygen, producing superoxide through an outer-sphere reaction. Activation of the NADPH oxidase complex is initiated by the assembly of cytosolic subunits of the NADPH oxidase complex with the core NADPH oxidase complex to form a complex at the plasma membrane or phagosomal membrane. This activation process is initiated by phosphorylation dependent binding of the cytosolic NCF1/p47-phox subunit to the C-terminus of CYBA/p22-phox. Aassociates with NOX3 to form a functional NADPH oxidase constitutively generating superoxide. The polypeptide is Cytochrome b-245 light chain (Bison bison (American bison)).